Here is a 340-residue protein sequence, read N- to C-terminus: Ubiquitin-like domain-containing CTD phosphatase (340 aa).

In terms of domain architecture, Ubiquitin-like spans 24–101 (LTLTVKWNGK…MTMIGTVEDD (78 aa)). The region spanning 151 to 312 (CRQGKKLLVL…VKLTQYLLTI (162 aa)) is the FCP1 homology domain. The phosphatase stretch occupies residues 151 to 312 (CRQGKKLLVL…VKLTQYLLTI (162 aa)). The Mg(2+) site is built by Asp-161, Asp-163, and Asp-271.

The cofactor is Mg(2+).

It is found in the nucleus. It carries out the reaction O-phospho-L-seryl-[protein] + H2O = L-seryl-[protein] + phosphate. The catalysed reaction is O-phospho-L-threonyl-[protein] + H2O = L-threonyl-[protein] + phosphate. In terms of biological role, dephosphorylates 26S nuclear proteasomes, thereby decreasing their proteolytic activity. The dephosphorylation may prevent assembly of the core and regulatory particles (CP and RP) into mature 26S proteasome. The sequence is that of Ubiquitin-like domain-containing CTD phosphatase from Arabidopsis thaliana (Mouse-ear cress).